We begin with the raw amino-acid sequence, 321 residues long: Lipoyl synthase (321 aa).

Positions 68, 73, 79, 94, 98, 101, and 308 each coordinate [4Fe-4S] cluster. Residues 80–297 (FNHGTATFMI…KALADELGFT (218 aa)) form the Radical SAM core domain.

It belongs to the radical SAM superfamily. Lipoyl synthase family. [4Fe-4S] cluster serves as cofactor.

The protein localises to the cytoplasm. It catalyses the reaction [[Fe-S] cluster scaffold protein carrying a second [4Fe-4S](2+) cluster] + N(6)-octanoyl-L-lysyl-[protein] + 2 oxidized [2Fe-2S]-[ferredoxin] + 2 S-adenosyl-L-methionine + 4 H(+) = [[Fe-S] cluster scaffold protein] + N(6)-[(R)-dihydrolipoyl]-L-lysyl-[protein] + 4 Fe(3+) + 2 hydrogen sulfide + 2 5'-deoxyadenosine + 2 L-methionine + 2 reduced [2Fe-2S]-[ferredoxin]. The protein operates within protein modification; protein lipoylation via endogenous pathway; protein N(6)-(lipoyl)lysine from octanoyl-[acyl-carrier-protein]: step 2/2. In terms of biological role, catalyzes the radical-mediated insertion of two sulfur atoms into the C-6 and C-8 positions of the octanoyl moiety bound to the lipoyl domains of lipoate-dependent enzymes, thereby converting the octanoylated domains into lipoylated derivatives. In Shewanella baltica (strain OS223), this protein is Lipoyl synthase.